Reading from the N-terminus, the 577-residue chain is Insulin-like growth factor 2 mRNA-binding protein 1 (577 aa).

RRM domains follow at residues 2–75 (NKLY…HSVP) and 81–156 (RKIQ…YIPD). 2 positions are modified to phosphoserine: S12 and S73. The tract at residues 160–190 (AQGPENGRRGGFGSRGQPRQGSPVAAGAPAK) is disordered. S181 carries the post-translational modification Phosphoserine. KH domains are found at residues 195 to 260 (DIPL…CKMI), 276 to 343 (EVPL…EQEI), 405 to 470 (QEMV…QGRI), and 487 to 553 (KLET…QRKI). Positions 310–324 (ITISSLQDLTLYNPE) are sufficient for nuclear export. A sufficient for nuclear export region spans residues 485–495 (EVKLETHIRVP). Phosphothreonine is present on T528.

The protein belongs to the RRM IMP/VICKZ family. In terms of assembly, can form homodimers and heterodimers with IGF2BP1 and IGF2BP3. Component of the coding region determinant (CRD)-mediated complex, composed of DHX9, HNRNPU, IGF2BP1, SYNCRIP and YBX1. During HCV infection, identified in a HCV IRES-mediated translation complex, at least composed of EIF3C, IGF2BP1, RPS3 and HCV RNA-replicon. Interacts (via the KH domains) with HIV-1 GAG (via the second zinc finger motif of NC). Associates (via the RRM domains and KH domains) with HIV-1 particles. Identified in a mRNP complex, composed of at least DHX9, DDX3X, ELAVL1, HNRNPU, IGF2BP1, ILF3, PABPC1, PCBP2, PTBP2, STAU1, STAU2, SYNCRIP and YBX1. Identified in a IGF2BP1-dependent mRNP granule complex containing untranslated mRNAs. Interacts with DHX9, ELAVL2, HNRNPA2B1, HNRNPC, HNRNPH1, HNRNPU, IGF2BP2, ILF2, and YBX1. Interacts with FMR1. Component of a multisubunit autoregulatory RNP complex (ARC), at least composed of IGF2BP1, PABPC1 and CSDE1/UNR. Directly interacts with PABPC1. Component of a TAU mRNP complex, at least composed of IGF2BP1, ELAVL4 and G3BP. Interacts with ELAVL4 in an RNA-dependent manner. Associates with microtubules and polysomes. Interacts with AGO1 and AGO2. Interacts with ELAVL1 and MATR3. Interacts (via KH3 and KH4 domains) with SEPIN14P20 peptide RBRP; the interaction results in increased binding of IGF2BP1 to N6-methyladenosine (m6A)-containing mRNAs. Phosphorylated at Ser-181 by mTORC2 cotranslationally, promoting binding to the 3'-UTR of IGF2 mRNA. Mainly expressed in the embryo, including in fetal liver, fetal lung, fetal kidney, fetal thymus (at protein level). Also expressed follicles of ovary, as well as in gonocytes of testis, spermatogonia, semen, oocytes and placenta (at protein level). Expressed in various cancers, including testis and lung cancers (at protein level), as well as kidney, prostate and trachea cancers.

The protein localises to the nucleus. The protein resides in the cytoplasm. It localises to the perinuclear region. It is found in the P-body. Its subcellular location is the stress granule. The protein localises to the cell projection. The protein resides in the lamellipodium. It localises to the dendrite. It is found in the dendritic spine. Its subcellular location is the growth cone. The protein localises to the filopodium. The protein resides in the axon. RNA-binding factor that recruits target transcripts to cytoplasmic protein-RNA complexes (mRNPs). This transcript 'caging' into mRNPs allows mRNA transport and transient storage. It also modulates the rate and location at which target transcripts encounter the translational apparatus and shields them from endonuclease attacks or microRNA-mediated degradation. Preferentially binds to N6-methyladenosine (m6A)-containing mRNAs and increases their stability. Plays a direct role in the transport and translation of transcripts required for axonal regeneration in adult sensory neurons. Regulates localized beta-actin/ACTB mRNA translation, a crucial process for cell polarity, cell migration and neurite outgrowth. Co-transcriptionally associates with the ACTB mRNA in the nucleus. This binding involves a conserved 54-nucleotide element in the ACTB mRNA 3'-UTR, known as the 'zipcode'. The RNP thus formed is exported to the cytoplasm, binds to a motor protein and is transported along the cytoskeleton to the cell periphery. During transport, prevents ACTB mRNA from being translated into protein. When the RNP complex reaches its destination near the plasma membrane, IGF2BP1 is phosphorylated. This releases the mRNA, allowing ribosomal 40S and 60S subunits to assemble and initiate ACTB protein synthesis. Monomeric ACTB then assembles into the subcortical actin cytoskeleton. During neuronal development, key regulator of neurite outgrowth, growth cone guidance and neuronal cell migration, presumably through the spatiotemporal fine tuning of protein synthesis, such as that of ACTB. May regulate mRNA transport to activated synapses. Binds to and stabilizes ABCB1/MDR-1 mRNA. During interstinal wound repair, interacts with and stabilizes PTGS2 transcript. PTGS2 mRNA stabilization may be crucial for colonic mucosal wound healing. Binds to the 3'-UTR of IGF2 mRNA by a mechanism of cooperative and sequential dimerization and regulates IGF2 mRNA subcellular localization and translation. Binds to MYC mRNA, in the coding region instability determinant (CRD) of the open reading frame (ORF), hence preventing MYC cleavage by endonucleases and possibly microRNA targeting to MYC-CRD. Binding to MYC mRNA is enhanced by m6A-modification of the CRD. Binds to the 3'-UTR of CD44 mRNA and stabilizes it, hence promotes cell adhesion and invadopodia formation in cancer cells. Binds to the oncofetal H19 transcript and to the neuron-specific TAU mRNA and regulates their localizations. Binds to and stabilizes BTRC/FBW1A mRNA. Binds to the adenine-rich autoregulatory sequence (ARS) located in PABPC1 mRNA and represses its translation. PABPC1 mRNA-binding is stimulated by PABPC1 protein. Prevents BTRC/FBW1A mRNA degradation by disrupting microRNA-dependent interaction with AGO2. Promotes the directed movement of tumor-derived cells by fine-tuning intracellular signaling networks. Binds to MAPK4 3'-UTR and inhibits its translation. Interacts with PTEN transcript open reading frame (ORF) and prevents mRNA decay. This combined action on MAPK4 (down-regulation) and PTEN (up-regulation) antagonizes HSPB1 phosphorylation, consequently it prevents G-actin sequestration by phosphorylated HSPB1, allowing F-actin polymerization. Hence enhances the velocity of cell migration and stimulates directed cell migration by PTEN-modulated polarization. Interacts with Hepatitis C virus (HCV) 5'-UTR and 3'-UTR and specifically enhances translation at the HCV IRES, but not 5'-cap-dependent translation, possibly by recruiting eIF3. Interacts with HIV-1 GAG protein and blocks the formation of infectious HIV-1 particles. Reduces HIV-1 assembly by inhibiting viral RNA packaging, as well as assembly and processing of GAG protein on cellular membranes. During cellular stress, such as oxidative stress or heat shock, stabilizes target mRNAs that are recruited to stress granules, including CD44, IGF2, MAPK4, MYC, PTEN, RAPGEF2 and RPS6KA5 transcripts. The chain is Insulin-like growth factor 2 mRNA-binding protein 1 (IGF2BP1) from Homo sapiens (Human).